Reading from the N-terminus, the 830-residue chain is Ent-cassa-12,15-diene synthase (830 aa).

The segment at 1 to 50 (MMLLGSPSSGGYGGKFAGASPAGGTTTMAPSAKQPSSRAPPPGITGGRND) is disordered. Residues 23 to 37 (GGTTTMAPSAKQPSS) are compositionally biased toward polar residues. 4 residues coordinate Mg(2+): aspartate 577, aspartate 581, asparagine 721, and glutamate 729. A DDXXD motif motif is present at residues 577-581 (DDLFD).

This sequence belongs to the terpene synthase family. Requires Mg(2+) as cofactor. In terms of tissue distribution, expressed in roots and stems.

It catalyses the reaction ent-copalyl diphosphate = ent-cassa-12,15-diene + diphosphate. In terms of biological role, involved in phytocassane phytoalexins biosynthesis. Catalyzes the conversion of ent-copalyl diphosphate to the phytoalexin precursor ent-cassa-12,15-diene. The chain is Ent-cassa-12,15-diene synthase (KSL7) from Oryza sativa subsp. indica (Rice).